A 253-amino-acid chain; its full sequence is MVSSFTSAPRSGFYYFAQGWKLVSQPGIRRFVILPLLVNILLMGGAFWWLFTQLDVWIPTLMSYVPDWLQWLSYLLWPLAVISVLLVFGYFFSTIANWIAAPFNGLLAEQLEARLTGATPPDTGIFGIMKDVPRIMKREWQKFAWYLPRAIVLLILYLIPGIGQTVAPVLWFLFSAWMLAIQYCDYPFDNHKVPFKEMRTALRTRKITNMQFGALTSLFTMIPLLNLFIMPVAVCGATAMWVDCYRDKHAMWR.

Helical transmembrane passes span 31–51 (FVIL…WWLF), 75–95 (LLWP…FSTI), 151–171 (IVLL…PVLW), and 222–242 (IPLL…AMWV).

Belongs to the CysZ family.

Its subcellular location is the cell inner membrane. Functionally, high affinity, high specificity proton-dependent sulfate transporter, which mediates sulfate uptake. Provides the sulfur source for the cysteine synthesis pathway. In Escherichia coli (strain 55989 / EAEC), this protein is Sulfate transporter CysZ.